A 628-amino-acid polypeptide reads, in one-letter code: Neutral/alkaline invertase 1, mitochondrial (628 aa).

The N-terminal 35 residues, 1-35 (MAAAAISHLRRGAPRHARALLYLSTRRFSSSSAAG), are a transit peptide targeting the mitochondrion. Over residues 79–90 (ASSAPPLESPPI) the composition is skewed to low complexity. Residues 79-113 (ASSAPPLESPPIEELPDDATPPPEEEPGLPAPEKD) are disordered.

This sequence belongs to the glycosyl hydrolase 100 family. In terms of tissue distribution, expressed in roots, leaf and stems.

Its subcellular location is the mitochondrion. The catalysed reaction is Hydrolysis of terminal non-reducing beta-D-fructofuranoside residues in beta-D-fructofuranosides.. Mitochondrial invertase that cleaves sucrose into glucose and fructose. This chain is Neutral/alkaline invertase 1, mitochondrial, found in Oryza sativa subsp. japonica (Rice).